Consider the following 193-residue polypeptide: Large ribosomal subunit protein bL12cy (193 aa).

The transit peptide at 1–59 (MAATTLSIATTIRSSSFSSGLASAHHFPSRPLSIEFPFSFGVSSSSTLSHRAIYLHPIS) directs the protein to the chloroplast. Basic and acidic residues predominate over residues 170–187 (GVTKDEAEEDKTQLEEAG). The interval 170–193 (GVTKDEAEEDKTQLEEAGAKVSIV) is disordered.

Belongs to the bacterial ribosomal protein bL12 family.

Its subcellular location is the plastid. The protein localises to the chloroplast. In Arabidopsis thaliana (Mouse-ear cress), this protein is Large ribosomal subunit protein bL12cy (RPL12B).